The chain runs to 87 residues: Large ribosomal subunit protein bL31B (87 aa).

The protein belongs to the bacterial ribosomal protein bL31 family. Type B subfamily. Part of the 50S ribosomal subunit.

This Ralstonia nicotianae (strain ATCC BAA-1114 / GMI1000) (Ralstonia solanacearum) protein is Large ribosomal subunit protein bL31B.